The primary structure comprises 141 residues: Large ribosomal subunit protein uL14 (141 aa).

The protein belongs to the universal ribosomal protein uL14 family. Part of the 50S ribosomal subunit. Forms a cluster with proteins L3 and L24e, part of which may contact the 16S rRNA in 2 intersubunit bridges.

Functionally, binds to 23S rRNA. Forms part of two intersubunit bridges in the 70S ribosome. The chain is Large ribosomal subunit protein uL14 from Pyrococcus furiosus (strain ATCC 43587 / DSM 3638 / JCM 8422 / Vc1).